A 696-amino-acid chain; its full sequence is DNA ligase (696 aa).

NAD(+)-binding positions include 36 to 40, 85 to 86, and glutamate 124; these read DAVYD and SL. Lysine 126 (N6-AMP-lysine intermediate) is an active-site residue. NAD(+) is bound by residues arginine 147, glutamate 184, lysine 308, and lysine 332. Positions 426, 429, 444, and 449 each coordinate Zn(2+). The 79-residue stretch at 618–696 folds into the BRCT domain; that stretch reads QRTVSLQGQT…EEELLKLLAS (79 aa).

This sequence belongs to the NAD-dependent DNA ligase family. LigA subfamily. The cofactor is Mg(2+). Requires Mn(2+) as cofactor.

The enzyme catalyses NAD(+) + (deoxyribonucleotide)n-3'-hydroxyl + 5'-phospho-(deoxyribonucleotide)m = (deoxyribonucleotide)n+m + AMP + beta-nicotinamide D-nucleotide.. DNA ligase that catalyzes the formation of phosphodiester linkages between 5'-phosphoryl and 3'-hydroxyl groups in double-stranded DNA using NAD as a coenzyme and as the energy source for the reaction. It is essential for DNA replication and repair of damaged DNA. The chain is DNA ligase from Prochlorococcus marinus (strain MIT 9303).